Here is a 349-residue protein sequence, read N- to C-terminus: Ferredoxin--NADP reductase (349 aa).

FAD is bound by residues Asp-43, Gln-51, Tyr-56, Val-96, Phe-131, Asp-295, and Ser-336.

The protein belongs to the ferredoxin--NADP reductase type 2 family. Homodimer. The cofactor is FAD.

The enzyme catalyses 2 reduced [2Fe-2S]-[ferredoxin] + NADP(+) + H(+) = 2 oxidized [2Fe-2S]-[ferredoxin] + NADPH. The chain is Ferredoxin--NADP reductase from Paraburkholderia phytofirmans (strain DSM 17436 / LMG 22146 / PsJN) (Burkholderia phytofirmans).